The sequence spans 37 residues: Cytochrome b6-f complex subunit 7 (37 aa).

A helical membrane pass occupies residues 5–25; sequence IFGTAFLFIVLVPVGLALGAF.

Belongs to the PetM family. As to quaternary structure, the 4 large subunits of the cytochrome b6-f complex are cytochrome b6, subunit IV (17 kDa polypeptide, PetD), cytochrome f and the Rieske protein, while the 4 small subunits are PetG, PetL, PetM and PetN. The complex functions as a dimer.

It is found in the cellular thylakoid membrane. Its function is as follows. Component of the cytochrome b6-f complex, which mediates electron transfer between photosystem II (PSII) and photosystem I (PSI), cyclic electron flow around PSI, and state transitions. This Synechococcus elongatus (strain ATCC 33912 / PCC 7942 / FACHB-805) (Anacystis nidulans R2) protein is Cytochrome b6-f complex subunit 7.